A 255-amino-acid polypeptide reads, in one-letter code: Zinc finger CCCH domain-containing protein 37 (255 aa).

2 consecutive C3H1-type zinc fingers follow at residues Ala-98–Phe-128 and Tyr-137–Ala-159.

The polypeptide is Zinc finger CCCH domain-containing protein 37 (Oryza sativa subsp. japonica (Rice)).